We begin with the raw amino-acid sequence, 943 residues long: Sodium- and chloride-dependent GABA transporter ine (943 aa).

Over 1-345 (MAENKDVSQV…RQQHWANKMQ (345 aa)) the chain is Cytoplasmic. The disordered stretch occupies residues 103-122 (HKQSPLRHTSVRTRPSSEVL). Transmembrane regions (helical) follow at residues 346 to 366 (FVLA…FPYM), 373 to 393 (GVFL…LLFM), and 418 to 438 (GAGL…SVII). Residues 439–510 (GYSIYYFFTS…GLEYPGMMRW (72 aa)) are Extracellular-facing. N476 carries N-linked (GlcNAc...) asparagine glycosylation. Helical transmembrane passes span 511-531 (ELFA…WKSI), 539-559 (YFTA…AVTL), 591-607 (FNSL…FASY), 618-638 (TVAV…FAFS), 679-699 (WAVM…FAIV), 723-743 (IVVL…IIQG), 754-774 (YAAS…IAWF), 799-819 (CWLV…LINY), and 836-856 (YGIG…YAVI). Residues 857-943 (NFLRSSGDTF…HAEAGGPCGQ (87 aa)) lie on the Cytoplasmic side of the membrane.

The protein belongs to the sodium:neurotransmitter symporter (SNF) (TC 2.A.22) family. Expressed both maternally and zygotically. Developing embryos exhibit expression in the posterior hindgut, foregut, midgut, Malpighian tubules, anal plate, Garland cells, and a subset of cells in the central nervous system. Central nervous system expression is seen in segmentally repeating in cells flanking the midline of the ventral ganglion. Isoform A and isoform B are colocalized in both the nervous system and the fluid reabsorption system.

It localises to the membrane. In terms of biological role, plays a role in neuronal membrane excitation, important for normal response properties of the photoreceptor. Able to control excitability from either neurons or glia cells. Ine negatively regulates neuronal sodium channels. Controls neurotransmitter-mediated signaling pathways associated with the structure of the larval peripheral nerve, ine and eag control perineurial glial growth through partially redundant pathways. Isoform A and isoform B are both functional, although isoform A functions with greater efficiency. Has a role in osmolyte transport within the Malpighian tubule and hindgut. This Drosophila melanogaster (Fruit fly) protein is Sodium- and chloride-dependent GABA transporter ine.